We begin with the raw amino-acid sequence, 188 residues long: Putative manganese efflux pump MntP (188 aa).

6 helical membrane-spanning segments follow: residues 2-22, 39-59, 67-87, 107-127, 129-149, and 166-186; these read IMGN…AFAV, LITG…GFLL, ITAI…LNMI, IILS…FAFL, VDIV…SFLG, and LAGG…HLGF.

The protein belongs to the MntP (TC 9.B.29) family.

It localises to the cell membrane. In terms of biological role, probably functions as a manganese efflux pump. In Desulfitobacterium hafniense (strain Y51), this protein is Putative manganese efflux pump MntP.